We begin with the raw amino-acid sequence, 360 residues long: Phenylalanine--tRNA ligase alpha subunit (360 aa).

Position 264 (Glu264) interacts with Mg(2+).

It belongs to the class-II aminoacyl-tRNA synthetase family. Phe-tRNA synthetase alpha subunit type 1 subfamily. As to quaternary structure, tetramer of two alpha and two beta subunits. Mg(2+) is required as a cofactor.

The protein resides in the cytoplasm. It catalyses the reaction tRNA(Phe) + L-phenylalanine + ATP = L-phenylalanyl-tRNA(Phe) + AMP + diphosphate + H(+). This is Phenylalanine--tRNA ligase alpha subunit from Streptomyces avermitilis (strain ATCC 31267 / DSM 46492 / JCM 5070 / NBRC 14893 / NCIMB 12804 / NRRL 8165 / MA-4680).